The sequence spans 82 residues: Sodium channel neurotoxin MeuNaTxalpha-3 (82 aa).

Residues 1–8 (LVMAGVES) form the signal peptide. The 71-residue stretch at 10–80 (RDGHIARNNN…VPIKVPGDCH (71 aa)) folds into the LCN-type CS-alpha/beta domain. 4 cysteine pairs are disulfide-bonded: C20-C79, C24-C52, C38-C62, and C42-C64.

Expressed by the venom gland.

It is found in the secreted. Alpha toxins bind voltage-independently at site-3 of sodium channels (Nav) and inhibit the inactivation of the activated channels, thereby blocking neuronal transmission. The sequence is that of Sodium channel neurotoxin MeuNaTxalpha-3 from Mesobuthus eupeus (Lesser Asian scorpion).